The chain runs to 354 residues: Probable protein phosphatase 2C 69 (354 aa).

The PPM-type phosphatase domain occupies 33–279; sequence SYGYASSAGK…DNITCVVVRF (247 aa). 4 residues coordinate Mn(2+): D69, G70, D231, and D270. The disordered stretch occupies residues 289 to 354; it reads HISSSSSKEA…LERNSVTDKV (66 aa). Composition is skewed to polar residues over residues 309-328 and 336-348; these read ISSN…PENV and ASRS…LERN.

This sequence belongs to the PP2C family. Mg(2+) serves as cofactor. Requires Mn(2+) as cofactor.

It catalyses the reaction O-phospho-L-seryl-[protein] + H2O = L-seryl-[protein] + phosphate. The catalysed reaction is O-phospho-L-threonyl-[protein] + H2O = L-threonyl-[protein] + phosphate. This Arabidopsis thaliana (Mouse-ear cress) protein is Probable protein phosphatase 2C 69.